A 431-amino-acid chain; its full sequence is Trigger factor (431 aa).

The 86-residue stretch at 161-246 folds into the PPIase FKBP-type domain; the sequence is DDRVTIDFVG…LKKVENIVLP (86 aa).

This sequence belongs to the FKBP-type PPIase family. Tig subfamily.

Its subcellular location is the cytoplasm. It carries out the reaction [protein]-peptidylproline (omega=180) = [protein]-peptidylproline (omega=0). Involved in protein export. Acts as a chaperone by maintaining the newly synthesized protein in an open conformation. Functions as a peptidyl-prolyl cis-trans isomerase. The sequence is that of Trigger factor from Glaesserella parasuis serovar 5 (strain SH0165) (Haemophilus parasuis).